Here is a 182-residue protein sequence, read N- to C-terminus: FMN reductase (NADH) RutF (182 aa).

This sequence belongs to the non-flavoprotein flavin reductase family. RutF subfamily.

The catalysed reaction is FMNH2 + NAD(+) = FMN + NADH + 2 H(+). Its function is as follows. Catalyzes the reduction of FMN to FMNH2 which is used to reduce pyrimidine by RutA via the Rut pathway. The chain is FMN reductase (NADH) RutF from Yersinia enterocolitica serotype O:8 / biotype 1B (strain NCTC 13174 / 8081).